A 284-amino-acid polypeptide reads, in one-letter code: Homeobox protein SIX1 (284 aa).

The segment at residues 124-183 (GEETSYCFKEKSRGVLREWYAHNPYPSPREKRELAEATGLTTTQVSNWFKNRRQRDRAAE) is a DNA-binding region (homeobox). The tract at residues 168 to 269 (VSNWFKNRRQ…LQTHQHQLQD (102 aa)) is disordered. Residues 179–190 (DRAAEAKERENT) are compositionally biased toward basic and acidic residues. Residues 242–269 (RSSNYSLPGLTASQPSHGLQTHQHQLQD) are compositionally biased toward polar residues.

The protein belongs to the SIX/Sine oculis homeobox family. In terms of assembly, interacts with DACH1. Interacts with EYA1. Interacts with EYA2. Interacts with CDH1. Interacts with TBX18. Interacts with CEBPA. Interacts with CEBPB. Interacts with EBF2. In terms of processing, phosphorylated during interphase; becomes hyperphosphorylated during mitosis. Hyperphosphorylation impairs binding to promoter elements. Post-translationally, ubiquitinated by the anaphase promoting complex (APC), leading to its proteasomal degradation. As to expression, specifically expressed in skeletal muscle.

It is found in the nucleus. The protein localises to the cytoplasm. Transcription factor that is involved in the regulation of cell proliferation, apoptosis and embryonic development. Plays an important role in the development of several organs, including kidney, muscle and inner ear. Depending on context, functions as a transcriptional repressor or activator. Lacks an activation domain, and requires interaction with EYA family members for transcription activation. Mediates nuclear translocation of EYA1 and EYA2. Binds the 5'-TCA[AG][AG]TTNC-3' motif present in the MEF3 element in the MYOG promoter and CIDEA enhancer. Regulates the expression of numerous genes, including MYC, CCND1 and EZR. Acts as an activator of the IGFBP5 promoter, probably coactivated by EYA2. Repression of precursor cell proliferation in myoblasts is switched to activation through recruitment of EYA3 to the SIX1-DACH1 complex. During myogenesis, seems to act together with EYA2 and DACH2. Regulates the expression of CCNA1. Promotes brown adipocyte differentiation. The protein is Homeobox protein SIX1 (SIX1) of Homo sapiens (Human).